Reading from the N-terminus, the 129-residue chain is Phosphoribosyl-AMP cyclohydrolase (129 aa).

A Mg(2+)-binding site is contributed by Asp-85. A Zn(2+)-binding site is contributed by Cys-86. Mg(2+) is bound by residues Asp-87 and Asp-89. 2 residues coordinate Zn(2+): Cys-102 and Cys-109.

The protein belongs to the PRA-CH family. In terms of assembly, homodimer. Mg(2+) is required as a cofactor. Requires Zn(2+) as cofactor.

It localises to the cytoplasm. It carries out the reaction 1-(5-phospho-beta-D-ribosyl)-5'-AMP + H2O = 1-(5-phospho-beta-D-ribosyl)-5-[(5-phospho-beta-D-ribosylamino)methylideneamino]imidazole-4-carboxamide. The protein operates within amino-acid biosynthesis; L-histidine biosynthesis; L-histidine from 5-phospho-alpha-D-ribose 1-diphosphate: step 3/9. Catalyzes the hydrolysis of the adenine ring of phosphoribosyl-AMP. The chain is Phosphoribosyl-AMP cyclohydrolase from Methanococcus maripaludis (strain C5 / ATCC BAA-1333).